The sequence spans 61 residues: IKCHNTPLPFIYKTCPEGNNLCFKGTLKFPKKITYKRGCADACPKTSALVKYVCCNTDKCN.

Intrachain disulfides connect Cys-3–Cys-22, Cys-15–Cys-39, Cys-43–Cys-54, and Cys-55–Cys-60.

The protein belongs to the three-finger toxin family. Short-chain subfamily. Orphan group XV sub-subfamily. Expressed by the venom gland.

The protein resides in the secreted. Its subcellular location is the target cell membrane. In terms of biological role, has low cytotoxic activity. The sequence is that of Cytotoxin homolog 3 from Naja melanoleuca (Forest cobra).